Consider the following 347-residue polypeptide: NADH-ubiquinone oxidoreductase chain 2 (347 aa).

Helical transmembrane passes span 1–21 (MNPMIFIILLTTIMLGTFIVT), 25–45 (HWFMTWLGFEMNMMAIVPVLM), 59–79 (YFLTQATASMILMLAIIINLM), 96–116 (MLITIALTMKLGLAPFHFWVP), 122–142 (VSLPSGLILLTWQKIAPLSLL), 149–169 (VNMNILLLMSLLSIMIGGWGG), 178–198 (IMAYSSIAHMGWMMAIMVYNP), 201–221 (SLLNLLIYIFMTSSMFMLLIF), 237–257 (APIITIMSLTTLLSLGGLPPL), 274–294 (NSVILPTLMAILALLNLFFYM), and 326–346 (MLPLITISTLALPLTPMLILL).

This sequence belongs to the complex I subunit 2 family. As to quaternary structure, core subunit of respiratory chain NADH dehydrogenase (Complex I) which is composed of 45 different subunits. Interacts with TMEM242.

The protein resides in the mitochondrion inner membrane. The catalysed reaction is a ubiquinone + NADH + 5 H(+)(in) = a ubiquinol + NAD(+) + 4 H(+)(out). In terms of biological role, core subunit of the mitochondrial membrane respiratory chain NADH dehydrogenase (Complex I) that is believed to belong to the minimal assembly required for catalysis. Complex I functions in the transfer of electrons from NADH to the respiratory chain. The immediate electron acceptor for the enzyme is believed to be ubiquinone. In Crocidura suaveolens gueldenstaedtii (Gueldenstaedt's shrew), this protein is NADH-ubiquinone oxidoreductase chain 2.